An 864-amino-acid chain; its full sequence is Carbohydrate-responsive element-binding protein (864 aa).

2 disordered regions span residues 15 to 41 and 53 to 77; these read PRVVPSPDSDSDTDLEDPSPRRSAGGL and MVSSPHSDSLTRRRDQEGPVGLADF. Serine 20, serine 23, and serine 25 each carry phosphoserine. Residue threonine 27 is modified to Phosphothreonine. Residue serine 196 is modified to Phosphoserine. Disordered stretches follow at residues 332-397, 449-468, 489-533, 547-570, and 583-602; these read SSGI…APGP, PGVSTLPAPTTFVPTPQPGP, PHFT…TARD, PEQALEPPTMPGTLLRPPESPQDT, and PIPAPTPPRPPPGPATLAPP. Over residues 351 to 368 the composition is skewed to polar residues; the sequence is GMTPHSGNTRLQARNSCS. Residues 513–531 show a composition bias toward low complexity; the sequence is ASPPTLASATASPTATATA. Serine 566 bears the Phosphoserine; by AMPK mark. Residues 583–596 are compositionally biased toward pro residues; sequence PIPAPTPPRPPPGP. 3 positions are modified to phosphoserine: serine 614, serine 626, and serine 643. One can recognise a bHLH domain in the interval 661-715; sequence NRRITHISAEQKRRFNIKLGFDTLHGLVSTLSAQPSLKVSKATTLQKTAEYILML. The segment at 715–736 is leucine-zipper; that stretch reads LQQERAAMQEEAQQLRDEIEEL.

In terms of assembly, binds DNA as a heterodimer with TCFL4/MLX. In terms of processing, phosphorylation at Ser-566 by AMPK inactivates the DNA-binding activity. In terms of tissue distribution, expressed in the ventricular and intermediate zones of the developing spinal cord of 12.5 dpc embryos. In later embryos expressed in a variety of tissues.

It localises to the nucleus. Transcriptional repressor. Binds to the canonical and non-canonical E box sequences 5'-CACGTG-3'. The sequence is that of Carbohydrate-responsive element-binding protein (Mlxipl) from Mus musculus (Mouse).